The sequence spans 626 residues: MLAFAARTVVKPLGLLKPSSLMKVSGRFKAHQDALPRLPVPPLQQSLDYYLKALQPIVSEEEWAHTKQLVDEFQTSGGVGERLQKGLERRAKKMENWLSEWWLKTAYLQFRQPVVIYSSPGVILPKQDFVDLQGQLRFAAKLIEGVLDFKSMIDNETLPVEFLGGQPLCMNQYYQILSSCRVPGPKQDSVVNFLKSKRPPTHITVVHNYQFFELDVYHSDGTPLTSDQIFVQLEKIWNSSLQSNKEPVGILTSNHRNTWAKAYNNLIKDKVNRESVNSIQKSIFTVCLDKQVPRVSDDVYRNHVAGQMLHGGGSKFNSGNRWFDKTLQFIVAEDGSCGMVYEHAAAEGPPIVALVDHVMEYTKKPELVRSPMVPLPMPKKLRFNITPEIKNDIEKAKQNLSIMIQDLDIMMLTFHHFGKDFPKSEKLSPDAFIQVALQLAYYRIYGQACATYESASLRMFHLGRTDTIRSASIDSLAFVKGMGDSTVPEQQKVELLRKAVQAHRAYTDRAIRGEAFDRHLLGLKLQAIEDLVSMPDIFMDTSYAIAMHFNLSTSQVPAKTDCVMFFGPVVPDGYGICYNPMEAHINFSVSAYNSCAETNAARMAHYLEKALLDMRTLLQNHPRAKL.

Lys-93 is subject to N6-succinyllysine. An N6-acetyllysine; alternate modification is found at Lys-261. An N6-succinyllysine; alternate modification is found at Lys-261. The residue at position 268 (Lys-268) is an N6-acetyllysine. His-343 functions as the Proton acceptor in the catalytic mechanism. Residues Lys-419 and 423-430 (KSEKLSPD) each bind CoA. Tyr-452 and Ser-454 together coordinate (R)-carnitine. Ser-456 contacts CoA. Thr-465 lines the (R)-carnitine pocket. Positions 504 and 555 each coordinate CoA. Positions 624–626 (AKL) match the Microbody targeting signal motif.

The protein belongs to the carnitine/choline acetyltransferase family. As to quaternary structure, monomer.

It is found in the endoplasmic reticulum. The protein resides in the peroxisome. Its subcellular location is the mitochondrion inner membrane. The enzyme catalyses (R)-carnitine + acetyl-CoA = O-acetyl-(R)-carnitine + CoA. It catalyses the reaction propanoyl-CoA + (R)-carnitine = O-propanoyl-(R)-carnitine + CoA. It carries out the reaction butanoyl-CoA + (R)-carnitine = O-butanoyl-(R)-carnitine + CoA. The catalysed reaction is hexanoyl-CoA + (R)-carnitine = O-hexanoyl-(R)-carnitine + CoA. The enzyme catalyses octanoyl-CoA + (R)-carnitine = O-octanoyl-(R)-carnitine + CoA. It catalyses the reaction decanoyl-CoA + (R)-carnitine = O-decanoyl-(R)-carnitine + CoA. It carries out the reaction 3-methylbutanoyl-CoA + (R)-carnitine = O-3-methylbutanoyl-(R)-carnitine + CoA. The catalysed reaction is 2-methylpropanoyl-CoA + (R)-carnitine = O-isobutanoyl-(R)-carnitine + CoA. The enzyme catalyses 2-methylbutanoyl-CoA + (R)-carnitine = O-2-methylbutanoyl-(R)-carnitine + CoA. It catalyses the reaction acetoacetyl-CoA + (R)-carnitine = O-3-oxobutanoyl-(R)-carnitine + CoA. It carries out the reaction 3-hydroxybutanoyl-CoA + (R)-carnitine = O-3-hydroxybutanoyl-(R)-carnitine + CoA. The catalysed reaction is 4,8-dimethylnonanoyl-CoA + (R)-carnitine = O-4,8-dimethylnonanoyl-(R)-carnitine + CoA. The enzyme catalyses 2,6-dimethylheptanoyl-CoA + (R)-carnitine = O-2,6-dimethylheptanoyl-(R)-carnitine + CoA. In terms of biological role, catalyzes the reversible transfer of acyl groups from carnitine to coenzyme A (CoA) and regulates the acyl-CoA/CoA ratio. Also plays a crucial role in the transport of fatty acids for beta-oxidation. Responsible for the synthesis of short- and branched-chain acylcarnitines. Active towards some branched-chain amino acid oxidation pathway (BCAAO) intermediates. Trans-2-enoyl-CoAs and 2-methylacyl-CoAs are poor substrates. This Mus musculus (Mouse) protein is Carnitine O-acetyltransferase.